The chain runs to 104 residues: Large ribosomal subunit protein uL23 (104 aa).

This sequence belongs to the universal ribosomal protein uL23 family. Part of the 50S ribosomal subunit. Contacts protein L29, and trigger factor when it is bound to the ribosome.

Its function is as follows. One of the early assembly proteins it binds 23S rRNA. One of the proteins that surrounds the polypeptide exit tunnel on the outside of the ribosome. Forms the main docking site for trigger factor binding to the ribosome. The polypeptide is Large ribosomal subunit protein uL23 (Rhodospirillum rubrum (strain ATCC 11170 / ATH 1.1.1 / DSM 467 / LMG 4362 / NCIMB 8255 / S1)).